The sequence spans 335 residues: Phosphatidylglycerol--prolipoprotein diacylglyceryl transferase (335 aa).

Transmembrane regions (helical) follow at residues 31–51 (IYWY…TYSL), 67–87 (YIFL…LAIG), and 100–120 (LAIQ…FPLI). R163 contacts a 1,2-diacyl-sn-glycero-3-phospho-(1'-sn-glycerol). Helical transmembrane passes span 213–233 (PLFL…YFGL), 235–255 (YIKQ…YGVT), and 277–297 (SLLL…APLL).

This sequence belongs to the Lgt family.

It localises to the cell membrane. The enzyme catalyses L-cysteinyl-[prolipoprotein] + a 1,2-diacyl-sn-glycero-3-phospho-(1'-sn-glycerol) = an S-1,2-diacyl-sn-glyceryl-L-cysteinyl-[prolipoprotein] + sn-glycerol 1-phosphate + H(+). The protein operates within protein modification; lipoprotein biosynthesis (diacylglyceryl transfer). In terms of biological role, catalyzes the transfer of the diacylglyceryl group from phosphatidylglycerol to the sulfhydryl group of the N-terminal cysteine of a prolipoprotein, the first step in the formation of mature lipoproteins. The protein is Phosphatidylglycerol--prolipoprotein diacylglyceryl transferase of Ureaplasma parvum serovar 3 (strain ATCC 27815 / 27 / NCTC 11736).